A 130-amino-acid polypeptide reads, in one-letter code: Small ribosomal subunit protein uS9 (130 aa).

It belongs to the universal ribosomal protein uS9 family.

The sequence is that of Small ribosomal subunit protein uS9 from Cupriavidus pinatubonensis (strain JMP 134 / LMG 1197) (Cupriavidus necator (strain JMP 134)).